We begin with the raw amino-acid sequence, 4555 residues long: Protocadherin Fat 3 (4555 aa).

Residues Met-1–Gly-31 form the signal peptide. The Extracellular portion of the chain corresponds to Leu-32 to Glu-4153. 33 Cadherin domains span residues Thr-43–Phe-157, Ser-158–Ile-265, Pro-263–Lys-374, Glu-376–Phe-471, Gln-472–Phe-577, Glu-578–Phe-680, Lys-726–Phe-830, Leu-831–Phe-935, Ile-936–Phe-1042, Pro-1043–Thr-1147, Ser-1148–Phe-1253, Pro-1254–Pro-1358, Asp-1362–Phe-1459, Ser-1460–Phe-1565, Thr-1566–Phe-1768, Leu-1769–Phe-1882, Thr-1883–Phe-1985, Thr-1982–Phe-2083, Val-2084–Phe-2185, Asp-2186–Phe-2286, Asp-2287–Phe-2393, Asn-2394–Phe-2495, Ser-2496–Phe-2599, Met-2600–Phe-2707, Thr-2708–Phe-2813, Glu-2814–Phe-2923, Ala-2924–Cys-3028, Asp-3029–Phe-3130, Ser-3131–Phe-3235, Glu-3236–Phe-3340, Ser-3341–Phe-3445, Thr-3446–Ala-3550, and Ile-3551–Phe-3652. Asn-48 carries an N-linked (GlcNAc...) asparagine glycan. N-linked (GlcNAc...) asparagine glycosylation occurs at Asn-341. Residues Asn-481, Asn-562, Asn-667, Asn-799, Asn-879, Asn-898, and Asn-1006 are each glycosylated (N-linked (GlcNAc...) asparagine). Residues Asn-1367 and Asn-1429 are each glycosylated (N-linked (GlcNAc...) asparagine). N-linked (GlcNAc...) asparagine glycosylation is present at Asn-1751. N-linked (GlcNAc...) asparagine glycans are attached at residues Asn-1944, Asn-1993, and Asn-1996. 4 N-linked (GlcNAc...) asparagine glycosylation sites follow: Asn-2208, Asn-2292, Asn-2331, and Asn-2467. An N-linked (GlcNAc...) asparagine glycan is attached at Asn-2734. The N-linked (GlcNAc...) asparagine glycan is linked to Asn-3000. Asn-3201 carries an N-linked (GlcNAc...) asparagine glycan. N-linked (GlcNAc...) asparagine glycosylation is found at Asn-3449, Asn-3618, and Asn-3741. In terms of domain architecture, EGF-like 1 spans Ser-3794–Ser-3832. 3 cysteine pairs are disulfide-bonded: Cys-3798/Cys-3809, Cys-3803/Cys-3821, and Cys-3823/Cys-3831. Residues His-3834–Cys-4017 enclose the Laminin G-like domain. Asn-3926 carries N-linked (GlcNAc...) asparagine glycosylation. Intrachain disulfides connect Cys-3984/Cys-4017, Cys-4024/Cys-4035, Cys-4029/Cys-4045, Cys-4047/Cys-4056, Cys-4063/Cys-4074, Cys-4068/Cys-4083, Cys-4085/Cys-4094, Cys-4101/Cys-4112, Cys-4106/Cys-4121, and Cys-4123/Cys-4132. 2 EGF-like domains span residues Tyr-4020 to Glu-4057 and Glu-4059 to Glu-4095. Residues Asp-4097–Gly-4133 enclose the EGF-like 4; calcium-binding domain. A helical membrane pass occupies residues Leu-4154–Phe-4174. Topologically, residues Arg-4175–Val-4555 are cytoplasmic. Residues Ser-4326–Asp-4343 show a composition bias toward polar residues. Disordered stretches follow at residues Ser-4326 to Asp-4347, Gly-4395 to Asp-4424, and Pro-4452 to Gly-4472. Residues Arg-4508 and Arg-4518 each carry the omega-N-methylarginine modification.

Restricted to the nervous system. Abundantly expressed in the fetal brain.

It localises to the membrane. In terms of biological role, may play a role in the interactions between neurites derived from specific subsets of neurons during development. This is Protocadherin Fat 3 (Fat3) from Rattus norvegicus (Rat).